Reading from the N-terminus, the 154-residue chain is NADPH-dependent 7-cyano-7-deazaguanine reductase (154 aa).

The tract at residues Met-1–Glu-24 is disordered. Cys-52 serves as the catalytic Thioimide intermediate. Asp-59 acts as the Proton donor in catalysis. Substrate is bound by residues Val-74–Ser-76 and His-93–Glu-94.

Belongs to the GTP cyclohydrolase I family. QueF type 1 subfamily.

It is found in the cytoplasm. The enzyme catalyses 7-aminomethyl-7-carbaguanine + 2 NADP(+) = 7-cyano-7-deazaguanine + 2 NADPH + 3 H(+). It participates in tRNA modification; tRNA-queuosine biosynthesis. In terms of biological role, catalyzes the NADPH-dependent reduction of 7-cyano-7-deazaguanine (preQ0) to 7-aminomethyl-7-deazaguanine (preQ1). The protein is NADPH-dependent 7-cyano-7-deazaguanine reductase of Sinorhizobium fredii (strain NBRC 101917 / NGR234).